The following is a 263-amino-acid chain: Shikimate dehydrogenase (NADP(+)) (263 aa).

Shikimate is bound by residues 16 to 18 (SKS) and Thr-65. Residue Lys-69 is the Proton acceptor of the active site. Positions 90 and 105 each coordinate shikimate. Residues 125 to 129 (GSGGS) and Leu-208 contribute to the NADP(+) site. Position 210 (Tyr-210) interacts with shikimate. Gly-230 is a binding site for NADP(+).

Belongs to the shikimate dehydrogenase family. As to quaternary structure, homodimer.

The enzyme catalyses shikimate + NADP(+) = 3-dehydroshikimate + NADPH + H(+). The protein operates within metabolic intermediate biosynthesis; chorismate biosynthesis; chorismate from D-erythrose 4-phosphate and phosphoenolpyruvate: step 4/7. Functionally, involved in the biosynthesis of the chorismate, which leads to the biosynthesis of aromatic amino acids. Catalyzes the reversible NADPH linked reduction of 3-dehydroshikimate (DHSA) to yield shikimate (SA). This Helicobacter pylori (strain P12) protein is Shikimate dehydrogenase (NADP(+)).